We begin with the raw amino-acid sequence, 258 residues long: Imidazole glycerol phosphate synthase subunit HisF (258 aa).

Catalysis depends on residues Asp12 and Asp131.

It belongs to the HisA/HisF family. As to quaternary structure, heterodimer of HisH and HisF.

The protein resides in the cytoplasm. It catalyses the reaction 5-[(5-phospho-1-deoxy-D-ribulos-1-ylimino)methylamino]-1-(5-phospho-beta-D-ribosyl)imidazole-4-carboxamide + L-glutamine = D-erythro-1-(imidazol-4-yl)glycerol 3-phosphate + 5-amino-1-(5-phospho-beta-D-ribosyl)imidazole-4-carboxamide + L-glutamate + H(+). The protein operates within amino-acid biosynthesis; L-histidine biosynthesis; L-histidine from 5-phospho-alpha-D-ribose 1-diphosphate: step 5/9. In terms of biological role, IGPS catalyzes the conversion of PRFAR and glutamine to IGP, AICAR and glutamate. The HisF subunit catalyzes the cyclization activity that produces IGP and AICAR from PRFAR using the ammonia provided by the HisH subunit. This chain is Imidazole glycerol phosphate synthase subunit HisF, found in Paenarthrobacter aurescens (strain TC1).